Reading from the N-terminus, the 709-residue chain is Ribosomal RNA large subunit methyltransferase K/L (709 aa).

A THUMP domain is found at 43-154 (LAYRITLWTR…NGVITIAMNF (112 aa)).

Belongs to the methyltransferase superfamily. RlmKL family.

The protein localises to the cytoplasm. It catalyses the reaction guanosine(2445) in 23S rRNA + S-adenosyl-L-methionine = N(2)-methylguanosine(2445) in 23S rRNA + S-adenosyl-L-homocysteine + H(+). The catalysed reaction is guanosine(2069) in 23S rRNA + S-adenosyl-L-methionine = N(2)-methylguanosine(2069) in 23S rRNA + S-adenosyl-L-homocysteine + H(+). Its function is as follows. Specifically methylates the guanine in position 2445 (m2G2445) and the guanine in position 2069 (m7G2069) of 23S rRNA. In Shewanella baltica (strain OS155 / ATCC BAA-1091), this protein is Ribosomal RNA large subunit methyltransferase K/L.